We begin with the raw amino-acid sequence, 234 residues long: ATP-dependent dethiobiotin synthetase BioD (234 aa).

Residue 12–17 (DVGKTF) participates in ATP binding. Thr16 provides a ligand contact to Mg(2+). Lys37 is an active-site residue. A substrate-binding site is contributed by Ser41. ATP contacts are provided by residues Asp52, 118 to 121 (EGAG), and 178 to 179 (SQ). Residues Asp52 and Glu118 each coordinate Mg(2+).

This sequence belongs to the dethiobiotin synthetase family. Homodimer. The cofactor is Mg(2+).

The protein resides in the cytoplasm. It catalyses the reaction (7R,8S)-7,8-diammoniononanoate + CO2 + ATP = (4R,5S)-dethiobiotin + ADP + phosphate + 3 H(+). It participates in cofactor biosynthesis; biotin biosynthesis; biotin from 7,8-diaminononanoate: step 1/2. Its function is as follows. Catalyzes a mechanistically unusual reaction, the ATP-dependent insertion of CO2 between the N7 and N8 nitrogen atoms of 7,8-diaminopelargonic acid (DAPA, also called 7,8-diammoniononanoate) to form a ureido ring. The protein is ATP-dependent dethiobiotin synthetase BioD of Phenylobacterium zucineum (strain HLK1).